Here is a 222-residue protein sequence, read N- to C-terminus: Ribonuclease 3 (222 aa).

In terms of domain architecture, RNase III spans 5-127 (PIKLEKKLKL…LIGAIYLDKG (123 aa)). Glu41 contributes to the Mg(2+) binding site. Residue Asp45 is part of the active site. The Mg(2+) site is built by Asp113 and Glu116. Residue Glu116 is part of the active site. Positions 152–221 (DAKTKLQEYS…ASLCLQDIFK (70 aa)) constitute a DRBM domain.

Belongs to the ribonuclease III family. Homodimer. Requires Mg(2+) as cofactor.

Its subcellular location is the cytoplasm. It catalyses the reaction Endonucleolytic cleavage to 5'-phosphomonoester.. Functionally, digests double-stranded RNA. Involved in the processing of primary rRNA transcript to yield the immediate precursors to the large and small rRNAs (23S and 16S). Processes some mRNAs, and tRNAs when they are encoded in the rRNA operon. Processes pre-crRNA and tracrRNA of type II CRISPR loci if present in the organism. This Pelagibacter ubique (strain HTCC1062) protein is Ribonuclease 3.